Here is a 345-residue protein sequence, read N- to C-terminus: D-alanine--D-alanine ligase (345 aa).

An ATP-grasp domain is found at 137 to 342 (KAAFSAAGLP…LEELVHQLLE (206 aa)). 169–224 (ETQLGYPCFIKPANLGSSVGISKATNRSELQAGLDLAASHDSRLLVEKGLQVRELE) contacts ATP. 3 residues coordinate Mg(2+): aspartate 295, glutamate 309, and asparagine 311.

It belongs to the D-alanine--D-alanine ligase family. Mg(2+) is required as a cofactor. It depends on Mn(2+) as a cofactor.

It localises to the cytoplasm. It catalyses the reaction 2 D-alanine + ATP = D-alanyl-D-alanine + ADP + phosphate + H(+). Its pathway is cell wall biogenesis; peptidoglycan biosynthesis. Cell wall formation. In Synechococcus sp. (strain RCC307), this protein is D-alanine--D-alanine ligase.